A 445-amino-acid chain; its full sequence is Trigger factor (445 aa).

The region spanning 168-253 (GDAVIVDFVG…IHEVRAPQTP (86 aa)) is the PPIase FKBP-type domain.

It belongs to the FKBP-type PPIase family. Tig subfamily.

It localises to the cytoplasm. The catalysed reaction is [protein]-peptidylproline (omega=180) = [protein]-peptidylproline (omega=0). Functionally, involved in protein export. Acts as a chaperone by maintaining the newly synthesized protein in an open conformation. Functions as a peptidyl-prolyl cis-trans isomerase. The protein is Trigger factor of Hyphomonas neptunium (strain ATCC 15444).